The primary structure comprises 305 residues: Glutaminase (305 aa).

The substrate site is built by Ser-61, Asn-113, Glu-158, Asn-165, Tyr-189, Tyr-241, and Val-259.

This sequence belongs to the glutaminase family. Homotetramer.

The catalysed reaction is L-glutamine + H2O = L-glutamate + NH4(+). This is Glutaminase from Alkaliphilus oremlandii (strain OhILAs) (Clostridium oremlandii (strain OhILAs)).